Here is a 506-residue protein sequence, read N- to C-terminus: Trans-cinnamate 4-monooxygenase C4H1 (506 aa).

2 short sequence motifs (nuclear localization signal) span residues 161–168 (VKKMPESA) and 247–254 (QRRLQLFK). Cys448 contributes to the heme binding site.

This sequence belongs to the cytochrome P450 family. Heme is required as a cofactor.

It is found in the nucleus. The catalysed reaction is (E)-cinnamate + reduced [NADPH--hemoprotein reductase] + O2 = (E)-4-coumarate + oxidized [NADPH--hemoprotein reductase] + H2O + H(+). Its pathway is phenylpropanoid metabolism; trans-4-coumarate biosynthesis; trans-4-coumarate from trans-cinnamate: step 1/1. In terms of biological role, component of the floral volatile benzenoid/phenylpropanoid (FVBP) biosynthetic pathway that controls carbon flux to pigments essential for pollination or UV protection, to numerous pytoalexins synthesized by plants when challenged by pathogens, and to lignins. The protein is Trans-cinnamate 4-monooxygenase C4H1 of Petunia hybrida (Petunia).